The following is a 283-amino-acid chain: DegV domain-containing protein BH3627 (283 aa).

One can recognise a DegV domain in the interval 4–281; the sequence is IAIVTDSTAY…EGSIGLSWYI (278 aa). Residues Thr-62 and Ser-95 each contribute to the hexadecanoate site.

In terms of biological role, may bind long-chain fatty acids, such as palmitate, and may play a role in lipid transport or fatty acid metabolism. This is DegV domain-containing protein BH3627 from Halalkalibacterium halodurans (strain ATCC BAA-125 / DSM 18197 / FERM 7344 / JCM 9153 / C-125) (Bacillus halodurans).